The primary structure comprises 496 residues: Inosine-5'-monophosphate dehydrogenase (496 aa).

CBS domains are found at residues 96–152 (VIKD…TKKV) and 156–212 (MTKD…PQAA). NAD(+) contacts are provided by residues Asp-247 and 299-301 (GIG). Positions 301 and 303 each coordinate K(+). Position 304 (Ser-304) interacts with IMP. Cys-306 is a binding site for K(+). Catalysis depends on Cys-306, which acts as the Thioimidate intermediate. IMP-binding positions include 339–341 (DGG), 362–363 (GS), and 386–390 (YRGMG). Arg-405 (proton acceptor) is an active-site residue. An IMP-binding site is contributed by Glu-423. K(+) is bound by residues Glu-477, Ser-478, and His-479.

This sequence belongs to the IMPDH/GMPR family. Homotetramer. K(+) serves as cofactor.

The catalysed reaction is IMP + NAD(+) + H2O = XMP + NADH + H(+). Its pathway is purine metabolism; XMP biosynthesis via de novo pathway; XMP from IMP: step 1/1. Its activity is regulated as follows. Mycophenolic acid (MPA) is a non-competitive inhibitor that prevents formation of the closed enzyme conformation by binding to the same site as the amobile flap. In contrast, mizoribine monophosphate (MZP) is a competitive inhibitor that induces the closed conformation. MPA is a potent inhibitor of mammalian IMPDHs but a poor inhibitor of the bacterial enzymes. MZP is a more potent inhibitor of bacterial IMPDH. Functionally, catalyzes the conversion of inosine 5'-phosphate (IMP) to xanthosine 5'-phosphate (XMP), the first committed and rate-limiting step in the de novo synthesis of guanine nucleotides, and therefore plays an important role in the regulation of cell growth. The chain is Inosine-5'-monophosphate dehydrogenase from Methanocaldococcus jannaschii (strain ATCC 43067 / DSM 2661 / JAL-1 / JCM 10045 / NBRC 100440) (Methanococcus jannaschii).